The sequence spans 91 residues: Small ribosomal subunit protein uS19 (91 aa).

It belongs to the universal ribosomal protein uS19 family.

In terms of biological role, protein S19 forms a complex with S13 that binds strongly to the 16S ribosomal RNA. This is Small ribosomal subunit protein uS19 from Bordetella bronchiseptica (strain ATCC BAA-588 / NCTC 13252 / RB50) (Alcaligenes bronchisepticus).